Here is a 110-residue protein sequence, read N- to C-terminus: MNVPKARLLKVAELSAKIFDQNFNPSGIRTGSKILNERLKGPSVASYYGNPDILKFRHLKTLYPDIEFVDLEEQYRLSMVEAKKRRGKGAPKKMKKDAAATAKGKGKKKK.

Over residues 84 to 95 (KRRGKGAPKKMK) the composition is skewed to basic residues. Positions 84–110 (KRRGKGAPKKMKKDAAATAKGKGKKKK) are disordered.

The protein belongs to the mitochondrion-specific ribosomal protein mS33 family. As to quaternary structure, component of the mitochondrial small ribosomal subunit (mt-SSU). Mature yeast 74S mitochondrial ribosomes consist of a small (37S) and a large (54S) subunit. The 37S small subunit contains a 15S ribosomal RNA (15S mt-rRNA) and 34 different proteins. The 54S large subunit contains a 21S rRNA (21S mt-rRNA) and 46 different proteins.

It localises to the mitochondrion. In terms of biological role, component of the mitochondrial ribosome (mitoribosome), a dedicated translation machinery responsible for the synthesis of mitochondrial genome-encoded proteins, including at least some of the essential transmembrane subunits of the mitochondrial respiratory chain. The mitoribosomes are attached to the mitochondrial inner membrane and translation products are cotranslationally integrated into the membrane. The chain is Small ribosomal subunit protein mS33 (RSM27) from Saccharomyces cerevisiae (strain ATCC 204508 / S288c) (Baker's yeast).